Reading from the N-terminus, the 269-residue chain is Seven in absentia homolog 3 (269 aa).

The segment at 61 to 132 (GSFHPHHLSH…VVPHLRQIHR (72 aa)) adopts an SIAH-type; degenerate zinc-finger fold. C107, C114, H126, and H131 together coordinate Zn(2+).

The protein belongs to the SINA (Seven in absentia) family.

The protein localises to the mitochondrion. Negative regulator of PRKN translocation to damaged mitochondria. Acts probably by destabilizing PINK1 protein, hence inhibiting PRKN targeting to dysfunctional depolarized mitochondria. The chain is Seven in absentia homolog 3 (SIAH3) from Homo sapiens (Human).